A 602-amino-acid polypeptide reads, in one-letter code: Elongation factor 4 (602 aa).

The region spanning 7–189 (KRVRNFSIIA…AVVEKVPYPK (183 aa)) is the tr-type G domain. GTP is bound by residues 19–24 (DHGKST) and 136–139 (NKID).

This sequence belongs to the TRAFAC class translation factor GTPase superfamily. Classic translation factor GTPase family. LepA subfamily.

It is found in the cell membrane. The enzyme catalyses GTP + H2O = GDP + phosphate + H(+). Functionally, required for accurate and efficient protein synthesis under certain stress conditions. May act as a fidelity factor of the translation reaction, by catalyzing a one-codon backward translocation of tRNAs on improperly translocated ribosomes. Back-translocation proceeds from a post-translocation (POST) complex to a pre-translocation (PRE) complex, thus giving elongation factor G a second chance to translocate the tRNAs correctly. Binds to ribosomes in a GTP-dependent manner. This Clostridium tetani (strain Massachusetts / E88) protein is Elongation factor 4.